Consider the following 413-residue polypeptide: Serine protease inhibitor A3L (413 aa).

The N-terminal stretch at 1 to 28 (MAFIAALGLLMAGICPAVLCDGTLGRDT) is a signal peptide. Phosphoserine is present on Ser-30. 4 N-linked (GlcNAc...) asparagine glycosylation sites follow: Asn-102, Asn-182, Asn-220, and Asn-267. Positions 365 to 389 (GTEATAATGVATVIRRQPRTLNFNR) are RCL.

The protein belongs to the serpin family. N-glycosylated. As to expression, liver.

It localises to the secreted. The sequence is that of Serine protease inhibitor A3L (Serpina3l) from Rattus norvegicus (Rat).